The primary structure comprises 275 residues: Phospholipid scramblase (275 aa).

A helical membrane pass occupies residues 256–272; the sequence is WKMMLLAFALFLDYMYY.

This sequence belongs to the phospholipid scramblase family. In terms of assembly, forms homooligomers in the presence of calcium. It depends on Ca(2+) as a cofactor. Mg(2+) is required as a cofactor.

It localises to the membrane. The protein resides in the cell membrane. It catalyses the reaction a 1,2-diacyl-sn-glycero-3-phosphoethanolamine(in) = a 1,2-diacyl-sn-glycero-3-phosphoethanolamine(out). Its function is as follows. Catalyzes calcium-induced ATP-independent rapid bidirectional and non-specific movement of phospholipids (lipid scrambling or lipid flip-flop) between the inner and outer leaflet of the plasma membrane resulting in collapse of the phospholipid asymmetry. Preferentially, mediates calcium-dependent phosphatidylethanolamine externalization. During the liver stage, plays a role in the interaction with, and thus invasion of, host hepatocytes. Dispensable for host erythrocyte invasion and asexual parasite development. This Plasmodium falciparum (isolate 3D7) protein is Phospholipid scramblase.